A 131-amino-acid chain; its full sequence is Small ribosomal subunit protein uS11 (131 aa).

Belongs to the universal ribosomal protein uS11 family. In terms of assembly, part of the 30S ribosomal subunit. Interacts with proteins S7 and S18. Binds to IF-3.

Functionally, located on the platform of the 30S subunit, it bridges several disparate RNA helices of the 16S rRNA. Forms part of the Shine-Dalgarno cleft in the 70S ribosome. The polypeptide is Small ribosomal subunit protein uS11 (Helicobacter acinonychis (strain Sheeba)).